A 267-amino-acid chain; its full sequence is Probable membrane transporter protein MJ0441 (267 aa).

7 helical membrane-spanning segments follow: residues 10 to 30 (LLLLPLLIIVGFIVGILGSLF), 31 to 51 (GIGGGFLVAPILTFIFDYFGI), 55 to 75 (VKFAVGTSLFVVFINSIISIF), 87 to 107 (ASITIGIISLVFSYFSGFLVV), 158 to 178 (FLSGLFGIGGGIVIIPILAMA), 185 to 205 (AVAISVGVIPLTSIGGLISYL), and 213 to 233 (IYNIGYVSIPIALIMAIPIIY).

Belongs to the 4-toluene sulfonate uptake permease (TSUP) (TC 2.A.102) family.

The protein resides in the cell membrane. In Methanocaldococcus jannaschii (strain ATCC 43067 / DSM 2661 / JAL-1 / JCM 10045 / NBRC 100440) (Methanococcus jannaschii), this protein is Probable membrane transporter protein MJ0441.